The chain runs to 298 residues: Protease HtpX homolog (298 aa).

2 helical membrane passes run 15–35 (LIMVLFVVILTLVGAGLGYLF) and 38–58 (SPWTGIIIALAGSLIYLLIMW). H143 serves as a coordination point for Zn(2+). Residue E144 is part of the active site. H147 contributes to the Zn(2+) binding site. 2 helical membrane passes run 153 to 173 (ILLSTIGVVLVGVISFISGIA) and 197 to 217 (IIFKVIAIVFVLILGPISASL). A Zn(2+)-binding site is contributed by E227.

Belongs to the peptidase M48B family. It depends on Zn(2+) as a cofactor.

It is found in the cell membrane. In Lactobacillus acidophilus (strain ATCC 700396 / NCK56 / N2 / NCFM), this protein is Protease HtpX homolog.